The following is a 901-amino-acid chain: HTH-type transcriptional regulator MalT (901 aa).

39–46 (SPAGYGKT) contacts ATP. The HTH luxR-type domain occupies 829–894 (ELIRTSPLTQ…AAVQHAQKLL (66 aa)). The H-T-H motif DNA-binding region spans 853–872 (NEQIAGELEVAATTIKTHIR).

This sequence belongs to the MalT family. In terms of assembly, monomer in solution. Oligomerizes to an active state in the presence of the positive effectors ATP and maltotriose.

Activated by ATP and maltotriose, which are both required for DNA binding. In terms of biological role, positively regulates the transcription of the maltose regulon whose gene products are responsible for uptake and catabolism of malto-oligosaccharides. Specifically binds to the promoter region of its target genes, recognizing a short DNA motif called the MalT box. The sequence is that of HTH-type transcriptional regulator MalT from Escherichia coli O6:H1 (strain CFT073 / ATCC 700928 / UPEC).